Here is a 311-residue protein sequence, read N- to C-terminus: Ribonuclease HIII (311 aa).

The 217-residue stretch at 95–311 (MSIVGSDEVG…NTEKAFRLLK (217 aa)) folds into the RNase H type-2 domain. The a divalent metal cation site is built by Asp101, Glu102, and Asp206.

The protein belongs to the RNase HII family. RnhC subfamily. Mn(2+) serves as cofactor. Requires Mg(2+) as cofactor.

It is found in the cytoplasm. The enzyme catalyses Endonucleolytic cleavage to 5'-phosphomonoester.. Functionally, endonuclease that specifically degrades the RNA of RNA-DNA hybrids. This chain is Ribonuclease HIII, found in Bacillus anthracis (strain A0248).